Reading from the N-terminus, the 907-residue chain is MKLPCTIRSITSSHFRNSFRNVSSVIDSAQEECRIAEDKQFVDAVKRIVRGKRSWEIALSSELVSRRLKTVHVEEILIGTIDDPKLGLRFFNFLGLHRGFDHSTASFCILIHALVKANLFWPASSLLQTLLLRALKPSDVFNVLFSCYEKCKLSSSSSFDLLIQHYVRSRRVLDGVLVFKMMITKVSLLPEVRTLSALLHGLVKFRHFGLAMELFNDMVSVGIRPDVYIYTGVIRSLCELKDLSRAKEMIAHMEATGCDVNIVPYNVLIDGLCKKQKVWEAVGIKKDLAGKDLKPDVVTYCTLVYGLCKVQEFEIGLEMMDEMLCLRFSPSEAAVSSLVEGLRKRGKIEEALNLVKRVVDFGVSPNLFVYNALIDSLCKGRKFHEAELLFDRMGKIGLRPNDVTYSILIDMFCRRGKLDTALSFLGEMVDTGLKLSVYPYNSLINGHCKFGDISAAEGFMAEMINKKLEPTVVTYTSLMGGYCSKGKINKALRLYHEMTGKGIAPSIYTFTTLLSGLFRAGLIRDAVKLFNEMAEWNVKPNRVTYNVMIEGYCEEGDMSKAFEFLKEMTEKGIVPDTYSYRPLIHGLCLTGQASEAKVFVDGLHKGNCELNEICYTGLLHGFCREGKLEEALSVCQEMVQRGVDLDLVCYGVLIDGSLKHKDRKLFFGLLKEMHDRGLKPDDVIYTSMIDAKSKTGDFKEAFGIWDLMINEGCVPNEVTYTAVINGLCKAGFVNEAEVLCSKMQPVSSVPNQVTYGCFLDILTKGEVDMQKAVELHNAILKGLLANTATYNMLIRGFCRQGRIEEASELITRMIGDGVSPDCITYTTMINELCRRNDVKKAIELWNSMTEKGIRPDRVAYNTLIHGCCVAGEMGKATELRNEMLRQGLIPNNKTSRTTTSNDTSSKS.

PPR repeat units lie at residues 103-137 (STASFCILIHALVKANLFWPASSLLQTLLLRALKP), 155-185 (SSSSFDLLIQHYVRSRRVLDGVLVFKMMITK), 191-225 (EVRTLSALLHGLVKFRHFGLAMELFNDMVSVGIRP), 226-260 (DVYIYTGVIRSLCELKDLSRAKEMIAHMEATGCDV), 261-295 (NIVPYNVLIDGLCKKQKVWEAVGIKKDLAGKDLKP), 296-330 (DVVTYCTLVYGLCKVQEFEIGLEMMDEMLCLRFSP), 331-365 (SEAAVSSLVEGLRKRGKIEEALNLVKRVVDFGVSP), 366-400 (NLFVYNALIDSLCKGRKFHEAELLFDRMGKIGLRP), 401-435 (NDVTYSILIDMFCRRGKLDTALSFLGEMVDTGLKL), 436-470 (SVYPYNSLINGHCKFGDISAAEGFMAEMINKKLEP), 471-505 (TVVTYTSLMGGYCSKGKINKALRLYHEMTGKGIAP), 506-540 (SIYTFTTLLSGLFRAGLIRDAVKLFNEMAEWNVKP), 541-575 (NRVTYNVMIEGYCEEGDMSKAFEFLKEMTEKGIVP), 576-610 (DTYSYRPLIHGLCLTGQASEAKVFVDGLHKGNCEL), 611-645 (NEICYTGLLHGFCREGKLEEALSVCQEMVQRGVDL), 646-680 (DLVCYGVLIDGSLKHKDRKLFFGLLKEMHDRGLKP), 681-715 (DDVIYTSMIDAKSKTGDFKEAFGIWDLMINEGCVP), 716-750 (NEVTYTAVINGLCKAGFVNEAEVLCSKMQPVSSVP), 751-782 (NQVTYGCFLDILTKGEVDMQKAVELHNAILKG), 786-820 (NTATYNMLIRGFCRQGRIEEASELITRMIGDGVSP), 821-855 (DCITYTTMINELCRRNDVKKAIELWNSMTEKGIRP), and 856-890 (DRVAYNTLIHGCCVAGEMGKATELRNEMLRQGLIP). The segment at 887–907 (GLIPNNKTSRTTTSNDTSSKS) is disordered. Over residues 891–907 (NNKTSRTTTSNDTSSKS) the composition is skewed to low complexity.

It belongs to the PPR family. P subfamily.

The polypeptide is Putative pentatricopeptide repeat-containing protein At5g59900 (Arabidopsis thaliana (Mouse-ear cress)).